A 216-amino-acid chain; its full sequence is Thiamine-phosphate synthase (216 aa).

Residues 39-43 (QLRRK) and asparagine 71 contribute to the 4-amino-2-methyl-5-(diphosphooxymethyl)pyrimidine site. Aspartate 72 and aspartate 91 together coordinate Mg(2+). Serine 109 is a binding site for 4-amino-2-methyl-5-(diphosphooxymethyl)pyrimidine. Residue 136 to 138 (SPT) participates in 2-[(2R,5Z)-2-carboxy-4-methylthiazol-5(2H)-ylidene]ethyl phosphate binding. Residue lysine 139 coordinates 4-amino-2-methyl-5-(diphosphooxymethyl)pyrimidine. Residues glycine 172 and 192–193 (IT) contribute to the 2-[(2R,5Z)-2-carboxy-4-methylthiazol-5(2H)-ylidene]ethyl phosphate site.

The protein belongs to the thiamine-phosphate synthase family. Mg(2+) is required as a cofactor.

The enzyme catalyses 2-[(2R,5Z)-2-carboxy-4-methylthiazol-5(2H)-ylidene]ethyl phosphate + 4-amino-2-methyl-5-(diphosphooxymethyl)pyrimidine + 2 H(+) = thiamine phosphate + CO2 + diphosphate. It catalyses the reaction 2-(2-carboxy-4-methylthiazol-5-yl)ethyl phosphate + 4-amino-2-methyl-5-(diphosphooxymethyl)pyrimidine + 2 H(+) = thiamine phosphate + CO2 + diphosphate. The catalysed reaction is 4-methyl-5-(2-phosphooxyethyl)-thiazole + 4-amino-2-methyl-5-(diphosphooxymethyl)pyrimidine + H(+) = thiamine phosphate + diphosphate. It participates in cofactor biosynthesis; thiamine diphosphate biosynthesis; thiamine phosphate from 4-amino-2-methyl-5-diphosphomethylpyrimidine and 4-methyl-5-(2-phosphoethyl)-thiazole: step 1/1. Its function is as follows. Condenses 4-methyl-5-(beta-hydroxyethyl)thiazole monophosphate (THZ-P) and 2-methyl-4-amino-5-hydroxymethyl pyrimidine pyrophosphate (HMP-PP) to form thiamine monophosphate (TMP). In Bordetella avium (strain 197N), this protein is Thiamine-phosphate synthase.